The sequence spans 354 residues: Protein RecA (354 aa).

67 to 74 contacts ATP; that stretch reads GPESSGKT.

It belongs to the RecA family.

Its subcellular location is the cytoplasm. Its function is as follows. Can catalyze the hydrolysis of ATP in the presence of single-stranded DNA, the ATP-dependent uptake of single-stranded DNA by duplex DNA, and the ATP-dependent hybridization of homologous single-stranded DNAs. It interacts with LexA causing its activation and leading to its autocatalytic cleavage. This is Protein RecA from Yersinia enterocolitica serotype O:8 / biotype 1B (strain NCTC 13174 / 8081).